A 139-amino-acid polypeptide reads, in one-letter code: Large ribosomal subunit protein uL16 (139 aa).

Residues 1–19 (MLIPRKVKHRKQHHPKRSG) are compositionally biased toward basic residues. Residues 1-22 (MLIPRKVKHRKQHHPKRSGVAK) form a disordered region.

This sequence belongs to the universal ribosomal protein uL16 family. As to quaternary structure, part of the 50S ribosomal subunit.

In terms of biological role, binds 23S rRNA and is also seen to make contacts with the A and possibly P site tRNAs. This is Large ribosomal subunit protein uL16 from Acidothermus cellulolyticus (strain ATCC 43068 / DSM 8971 / 11B).